We begin with the raw amino-acid sequence, 350 residues long: MSNITDPQMWDFDDLNFTGMPPTDEGYSPCRLETETLNKYVVIITYALVFLLSLLGNSLVMLVILYSRVGRSVTDVYLLNLALADLLFALTLPIWAASKVNGWIFGTFLCKVVSLLKEVNFYSGILLLACISVDRYLAIVHATRTLTQKRHLVKFVCLGCWGLSMNLSLPFFLFRQAYHPNNSSPVCYEVLGNDTAKWRMVLRILPHTFGFIVPLFVMLFCYGFTLRTLFKAHMGQKHRAMRVIFAVVLIFLLCWLPYNLVLLADTLMRTQVIQESCERRNNIGRALDATEILGFLHSCLNPIIYAFIGQNFRHGFLKILAMHGLVSKEFLARHRVTSYTSSSVNVSSNL.

Residues 1–39 lie on the Extracellular side of the membrane; sequence MSNITDPQMWDFDDLNFTGMPPTDEGYSPCRLETETLNK. Residues asparagine 3 and asparagine 16 are each glycosylated (N-linked (GlcNAc...) asparagine). A helical membrane pass occupies residues 40–66; sequence YVVIITYALVFLLSLLGNSLVMLVILY. At 67–75 the chain is on the cytoplasmic side; sequence SRVGRSVTD. Residues 76-96 form a helical membrane-spanning segment; sequence VYLLNLALADLLFALTLPIWA. The Extracellular portion of the chain corresponds to 97–111; that stretch reads ASKVNGWIFGTFLCK. The cysteines at positions 110 and 187 are disulfide-linked. Residues 112–133 form a helical membrane-spanning segment; the sequence is VVSLLKEVNFYSGILLLACISV. The Cytoplasmic segment spans residues 134 to 154; the sequence is DRYLAIVHATRTLTQKRHLVK. The chain crosses the membrane as a helical span at residues 155 to 174; the sequence is FVCLGCWGLSMNLSLPFFLF. Over 175 to 199 the chain is Extracellular; the sequence is RQAYHPNNSSPVCYEVLGNDTAKWR. Residues 200–220 form a helical membrane-spanning segment; sequence MVLRILPHTFGFIVPLFVMLF. Residues 221-242 are Cytoplasmic-facing; that stretch reads CYGFTLRTLFKAHMGQKHRAMR. Residues 243–264 traverse the membrane as a helical segment; the sequence is VIFAVVLIFLLCWLPYNLVLLA. Residues 265–285 are Extracellular-facing; the sequence is DTLMRTQVIQESCERRNNIGR. A helical transmembrane segment spans residues 286-308; the sequence is ALDATEILGFLHSCLNPIIYAFI. The Cytoplasmic portion of the chain corresponds to 309-350; sequence GQNFRHGFLKILAMHGLVSKEFLARHRVTSYTSSSVNVSSNL.

This sequence belongs to the G-protein coupled receptor 1 family. Interacts with IL8. Interacts with GNAI2.

The protein resides in the cell membrane. Receptor to interleukin-8, which is a powerful neutrophils chemotactic factor. Binding of IL-8 to the receptor causes activation of neutrophils. This response is mediated via a G-protein that activates a phosphatidylinositol-calcium second messenger system. The protein is C-X-C chemokine receptor type 1 (CXCR1) of Pan troglodytes (Chimpanzee).